The following is a 166-amino-acid chain: Interferon gamma (166 aa).

Positions 1-23 (MKYTSYFLALQLCLLLGFSGSYG) are cleaved as a signal peptide. Glutamine 24 carries the pyrrolidone carboxylic acid modification. 2 N-linked (GlcNAc...) asparagine glycosylation sites follow: asparagine 39 and asparagine 106.

The protein belongs to the type II (or gamma) interferon family. As to quaternary structure, homodimer. Interacts with IFNGR1 (via extracellular domain); this interaction promotes IFNGR1 dimerization. Released primarily from activated T lymphocytes.

It localises to the secreted. In terms of biological role, type II interferon produced by immune cells such as T-cells and NK cells that plays crucial roles in antimicrobial, antiviral, and antitumor responses by activating effector immune cells and enhancing antigen presentation. Primarily signals through the JAK-STAT pathway after interaction with its receptor IFNGR1 to affect gene regulation. Upon IFNG binding, IFNGR1 intracellular domain opens out to allow association of downstream signaling components JAK2, JAK1 and STAT1, leading to STAT1 activation, nuclear translocation and transcription of IFNG-regulated genes. Many of the induced genes are transcription factors such as IRF1 that are able to further drive regulation of a next wave of transcription. Plays a role in class I antigen presentation pathway by inducing a replacement of catalytic proteasome subunits with immunoproteasome subunits. In turn, increases the quantity, quality, and repertoire of peptides for class I MHC loading. Increases the efficiency of peptide generation also by inducing the expression of activator PA28 that associates with the proteasome and alters its proteolytic cleavage preference. Up-regulates as well MHC II complexes on the cell surface by promoting expression of several key molecules such as cathepsins B/CTSB, H/CTSH, and L/CTSL. Participates in the regulation of hematopoietic stem cells during development and under homeostatic conditions by affecting their development, quiescence, and differentiation. The polypeptide is Interferon gamma (IFNG) (Moschus berezovskii (Chinese forest musk deer)).